The chain runs to 114 residues: Cytochrome b-c1 complex subunit 1, mitochondrial (114 aa).

N6-acetyllysine is present on K31.

This sequence belongs to the peptidase M16 family. UQCRC1/QCR1 subfamily. Component of the ubiquinol-cytochrome c oxidoreductase (cytochrome b-c1 complex, complex III, CIII), a multisubunit enzyme composed of 11 subunits. The complex is composed of 3 respiratory subunits cytochrome b, cytochrome c1 and Rieske protein UQCRFS1, 2 core protein subunits UQCRC1/QCR1 and UQCRC2/QCR2, and 6 low-molecular weight protein subunits UQCRH/QCR6, UQCRB/QCR7, UQCRQ/QCR8, UQCR10/QCR9, UQCR11/QCR10 and subunit 9, the cleavage product of Rieske protein UQCRFS1. The complex exists as an obligatory dimer and forms supercomplexes (SCs) in the inner mitochondrial membrane with NADH-ubiquinone oxidoreductase (complex I, CI) and cytochrome c oxidase (complex IV, CIV), resulting in different assemblies (supercomplex SCI(1)III(2)IV(1) and megacomplex MCI(2)III(2)IV(2)). Interacts with UQCC6. Interacts with STMP1.

The protein resides in the mitochondrion inner membrane. Component of the ubiquinol-cytochrome c oxidoreductase, a multisubunit transmembrane complex that is part of the mitochondrial electron transport chain which drives oxidative phosphorylation. The respiratory chain contains 3 multisubunit complexes succinate dehydrogenase (complex II, CII), ubiquinol-cytochrome c oxidoreductase (cytochrome b-c1 complex, complex III, CIII) and cytochrome c oxidase (complex IV, CIV), that cooperate to transfer electrons derived from NADH and succinate to molecular oxygen, creating an electrochemical gradient over the inner membrane that drives transmembrane transport and the ATP synthase. The cytochrome b-c1 complex catalyzes electron transfer from ubiquinol to cytochrome c, linking this redox reaction to translocation of protons across the mitochondrial inner membrane, with protons being carried across the membrane as hydrogens on the quinol. In the process called Q cycle, 2 protons are consumed from the matrix, 4 protons are released into the intermembrane space and 2 electrons are passed to cytochrome c. The 2 core subunits UQCRC1/QCR1 and UQCRC2/QCR2 are homologous to the 2 mitochondrial-processing peptidase (MPP) subunits beta-MPP and alpha-MPP respectively, and they seem to have preserved their MPP processing properties. May be involved in the in situ processing of UQCRFS1 into the mature Rieske protein and its mitochondrial targeting sequence (MTS)/subunit 9 when incorporated into complex III. Seems to play an important role in the maintenance of proper mitochondrial function in nigral dopaminergic neurons. This chain is Cytochrome b-c1 complex subunit 1, mitochondrial, found in Mesocricetus auratus (Golden hamster).